Reading from the N-terminus, the 445-residue chain is MGRLFGTDGVRGVANRELTAELALALGAATAQHLASSTGPGRRVAVVGRDPRASGEMLEAAVIAGLTSQGVDALRVGVLPTPAVAYLTGAYDADFGVMISASHNPMPDNGIKIFGPGGHKLDDATEDRIESLVAAGPGLRPVGSEIGRVIDAEDAADRYLRHVSKACTTRLDGLTVVVDCAHGAASEVGPRAYRAAGARVIEINADPNGLNINDDCGSTHLEAIRAAVLAHGADLGVAHDGDADRCLAVDANGDLVDGDAIMVVLALAMQEAGELASDTLVTTVMSNLGLHLAMREAGVNVRTTGVGDRYVLEELRAGDYSLGGEQSGHIVMPGLGSTGDGIVTGLRLMTRMVATGASLAALASRMQTLPQVLINVQVTDKAAAAAAPSVQAAVDRAETELGDTGRILLRPSGTEPLIRVMVEAADEEAAHRLATSVADAVSAAG.

Residue Ser-102 is the Phosphoserine intermediate of the active site. Positions 102, 240, 242, and 244 each coordinate Mg(2+). Ser-102 is modified (phosphoserine).

The protein belongs to the phosphohexose mutase family. Mg(2+) serves as cofactor. Activated by phosphorylation.

The catalysed reaction is alpha-D-glucosamine 1-phosphate = D-glucosamine 6-phosphate. In terms of biological role, catalyzes the conversion of glucosamine-6-phosphate to glucosamine-1-phosphate. This Mycobacterium marinum (strain ATCC BAA-535 / M) protein is Phosphoglucosamine mutase.